The chain runs to 355 residues: Uroporphyrinogen decarboxylase (355 aa).

Substrate-binding positions include 27-31 (RQAGR), Asp77, Tyr154, Thr209, and His328.

It belongs to the uroporphyrinogen decarboxylase family. Homodimer.

It is found in the cytoplasm. The enzyme catalyses uroporphyrinogen III + 4 H(+) = coproporphyrinogen III + 4 CO2. The protein operates within porphyrin-containing compound metabolism; protoporphyrin-IX biosynthesis; coproporphyrinogen-III from 5-aminolevulinate: step 4/4. Catalyzes the decarboxylation of four acetate groups of uroporphyrinogen-III to yield coproporphyrinogen-III. The sequence is that of Uroporphyrinogen decarboxylase from Dechloromonas aromatica (strain RCB).